The sequence spans 140 residues: Putative pre-16S rRNA nuclease (140 aa).

It belongs to the YqgF nuclease family.

The protein resides in the cytoplasm. Functionally, could be a nuclease involved in processing of the 5'-end of pre-16S rRNA. This is Putative pre-16S rRNA nuclease from Aeromonas salmonicida (strain A449).